Reading from the N-terminus, the 401-residue chain is MINKFKNFVSNYQQSNHYKEPLGFGIARVDIAPISKKILCATYPVLNWKDENLGSYAVFCNSLSKEKILKESASERVIEIDESFVLKALDFYTPFLNEAYSNKMAHKNIQVVLELLKALEENRLKNSDGESLYRLVILYEDKPCESVESAYMKLLALSLGKAPLRSLNLEGIFNQLSNAAWSGNKPYELEWLRMNEVALKMRDHFPSIDFIDKFPRYLMQLIPEFDNIRLLDSSKTRFGAYLGTGGYTQMPGASYVNFNAGAMGVCMNEGRISSSVVVGAGTDIGGGASVLGVLSGGNNNPISIGKNCLLGANSVTGISLGDGCIVDAGVAILAGSVIEIEENEFKKLLEVNSALEKHANNLYKGKELSGKNGVHFRSNSQNGKLIAFRSVKKIELNQNLH.

The Acyl-anhydride intermediate role is filled by Glu269. Succinyl-CoA contacts are provided by residues Arg271, Gly286, Ser289, Ala312, 327–328 (DA), Gly335, and Lys364.

It belongs to the type 2 tetrahydrodipicolinate N-succinyltransferase family. In terms of assembly, homotrimer.

The protein localises to the cytoplasm. The enzyme catalyses (S)-2,3,4,5-tetrahydrodipicolinate + succinyl-CoA + H2O = (S)-2-succinylamino-6-oxoheptanedioate + CoA. It functions in the pathway amino-acid biosynthesis; L-lysine biosynthesis via DAP pathway; LL-2,6-diaminopimelate from (S)-tetrahydrodipicolinate (succinylase route): step 1/3. Catalyzes the conversion of the cyclic tetrahydrodipicolinate (THDP) into the acyclic N-succinyl-L-2-amino-6-oxopimelate using succinyl-CoA. In Helicobacter pylori (strain ATCC 700392 / 26695) (Campylobacter pylori), this protein is 2,3,4,5-tetrahydropyridine-2,6-dicarboxylate N-succinyltransferase.